We begin with the raw amino-acid sequence, 635 residues long: Threonine--tRNA ligase (635 aa).

Residues 1-61 (MITVRLPDGS…EQDSDLSIIT (61 aa)) form the TGS domain. The segment at 242-533 (DHRKLGRALD…LIENHAGALP (292 aa)) is catalytic. Cys333, His384, and His510 together coordinate Zn(2+).

This sequence belongs to the class-II aminoacyl-tRNA synthetase family. In terms of assembly, homodimer. The cofactor is Zn(2+).

The protein localises to the cytoplasm. It catalyses the reaction tRNA(Thr) + L-threonine + ATP = L-threonyl-tRNA(Thr) + AMP + diphosphate + H(+). Functionally, catalyzes the attachment of threonine to tRNA(Thr) in a two-step reaction: L-threonine is first activated by ATP to form Thr-AMP and then transferred to the acceptor end of tRNA(Thr). Also edits incorrectly charged L-seryl-tRNA(Thr). In Herminiimonas arsenicoxydans, this protein is Threonine--tRNA ligase.